A 415-amino-acid polypeptide reads, in one-letter code: MGIQDARWPSEDEETHLLDSSSAEQTRGEKCSDSTPDVHIVEEYEDRAPATCQAPSTSTDTPVLSSSMICPPRQRVAHKCTQCGKCFIYRYELLEHQRLHTGENPYRCSQCGKAFRRTSDLSSHRRTQCIKAAYICIKCGNSFQSIQEKFRHQCVHSVQKFDCSQCGKSFKKMHLLGKHELTHTQNRIFTCRQCGKVYPGMSELRSHQKIHPPELSNQCMQCGKFFSSSACLTAHEVRHRQQRTQICARCGKAFKNKHDLNLHMRSHTGERPFQCTYCGKRFSVSGNLNIHVRTHTGEKPYLCSDCGKAFISAGELQIHRRTHTGEKPYKCSVCGRGFTMASKVTLHMRVHTGERPYVCSECGKGFSRGSELKKHSMNHTGVRPYACQLCAKTYTCLNHLKRHLKTHSVIQNQSV.

A disordered region spans residues 1-36 (MGIQDARWPSEDEETHLLDSSSAEQTRGEKCSDSTP). 12 consecutive C2H2-type zinc fingers follow at residues 78–100 (HKCTQCGKCFIYRYELLEHQRLH), 106–129 (YRCSQCGKAFRRTSDLSSHRRTQC), 134–156 (YICIKCGNSFQSIQEKFRHQCVH), 161–183 (FDCSQCGKSFKKMHLLGKHELTH), 189–211 (FTCRQCGKVYPGMSELRSHQKIH), 217–239 (NQCMQCGKFFSSSACLTAHEVRH), 245–267 (QICARCGKAFKNKHDLNLHMRSH), 273–295 (FQCTYCGKRFSVSGNLNIHVRTH), 301–323 (YLCSDCGKAFISAGELQIHRRTH), 329–351 (YKCSVCGRGFTMASKVTLHMRVH), 357–379 (YVCSECGKGFSRGSELKKHSMNH), and 385–407 (YACQLCAKTYTCLNHLKRHLKTH).

The protein resides in the nucleus. In Micropterus salmoides (Largemouth bass), this protein is Zinc finger protein ZFMSA12A.